Reading from the N-terminus, the 433-residue chain is Bifunctional protein GlmU (433 aa).

Residues 1–226 are pyrophosphorylase; the sequence is MLSVIILAAG…EECFLGVNSQ (226 aa). UDP-N-acetyl-alpha-D-glucosamine-binding positions include 7–10, Lys-21, and 80–81; these read LAAG and GT. Position 106 (Asp-106) interacts with Mg(2+). Gly-138, Glu-152, Asn-167, and Asn-224 together coordinate UDP-N-acetyl-alpha-D-glucosamine. Residue Asn-224 participates in Mg(2+) binding. The linker stretch occupies residues 227-247; it reads TERAKAEEIMLERLRKNAMDL. The segment at 248-433 is N-acetyltransferase; sequence GVVMQLPNSI…NGYFKFFKKP (186 aa). Residues Arg-311 and Lys-328 each coordinate UDP-N-acetyl-alpha-D-glucosamine. His-339 acts as the Proton acceptor in catalysis. Tyr-342 and Asn-353 together coordinate UDP-N-acetyl-alpha-D-glucosamine. Acetyl-CoA contacts are provided by residues Ala-356, 362–363, Ser-381, Ser-399, and Arg-416; that span reads NY.

This sequence in the N-terminal section; belongs to the N-acetylglucosamine-1-phosphate uridyltransferase family. The protein in the C-terminal section; belongs to the transferase hexapeptide repeat family. As to quaternary structure, homotrimer. Mg(2+) serves as cofactor.

The protein localises to the cytoplasm. The enzyme catalyses alpha-D-glucosamine 1-phosphate + acetyl-CoA = N-acetyl-alpha-D-glucosamine 1-phosphate + CoA + H(+). It catalyses the reaction N-acetyl-alpha-D-glucosamine 1-phosphate + UTP + H(+) = UDP-N-acetyl-alpha-D-glucosamine + diphosphate. Its pathway is nucleotide-sugar biosynthesis; UDP-N-acetyl-alpha-D-glucosamine biosynthesis; N-acetyl-alpha-D-glucosamine 1-phosphate from alpha-D-glucosamine 6-phosphate (route II): step 2/2. The protein operates within nucleotide-sugar biosynthesis; UDP-N-acetyl-alpha-D-glucosamine biosynthesis; UDP-N-acetyl-alpha-D-glucosamine from N-acetyl-alpha-D-glucosamine 1-phosphate: step 1/1. It participates in bacterial outer membrane biogenesis; LPS lipid A biosynthesis. Catalyzes the last two sequential reactions in the de novo biosynthetic pathway for UDP-N-acetylglucosamine (UDP-GlcNAc). The C-terminal domain catalyzes the transfer of acetyl group from acetyl coenzyme A to glucosamine-1-phosphate (GlcN-1-P) to produce N-acetylglucosamine-1-phosphate (GlcNAc-1-P), which is converted into UDP-GlcNAc by the transfer of uridine 5-monophosphate (from uridine 5-triphosphate), a reaction catalyzed by the N-terminal domain. The protein is Bifunctional protein GlmU of Helicobacter pylori (strain ATCC 700392 / 26695) (Campylobacter pylori).